We begin with the raw amino-acid sequence, 547 residues long: Chaperonin GroEL (547 aa).

Residues Thr30–Pro33, Lys51, Asp87–Thr91, Gly415, Asn479–Ala481, and Asp495 contribute to the ATP site.

Belongs to the chaperonin (HSP60) family. As to quaternary structure, forms a cylinder of 14 subunits composed of two heptameric rings stacked back-to-back. Interacts with the co-chaperonin GroES.

The protein localises to the cytoplasm. The enzyme catalyses ATP + H2O + a folded polypeptide = ADP + phosphate + an unfolded polypeptide.. Together with its co-chaperonin GroES, plays an essential role in assisting protein folding. The GroEL-GroES system forms a nano-cage that allows encapsulation of the non-native substrate proteins and provides a physical environment optimized to promote and accelerate protein folding. The chain is Chaperonin GroEL from Marinomonas sp. (strain MWYL1).